Reading from the N-terminus, the 295-residue chain is Indole-3-glycerol phosphate synthase (295 aa).

It belongs to the TrpC family.

It carries out the reaction 1-(2-carboxyphenylamino)-1-deoxy-D-ribulose 5-phosphate + H(+) = (1S,2R)-1-C-(indol-3-yl)glycerol 3-phosphate + CO2 + H2O. It participates in amino-acid biosynthesis; L-tryptophan biosynthesis; L-tryptophan from chorismate: step 4/5. This is Indole-3-glycerol phosphate synthase from Prochlorococcus marinus (strain NATL1A).